The sequence spans 198 residues: MRTFILKANTAVTSPDFSLKDLPGTGGRIDLLCRFLNSAFLLSHGIRKDVRVFMTLYGRPNPPKTIHFEGPKLKVRLNPDERSTALILKKALKIGEDLREPTKEVEVFPGVYVSNMTFEDVVRRVMKDSTLYYLVEDGKPITEIEFPQNPAFVLGDHLGLSKEDERFLEGIAKKVRIGRRSYLASHVVAFVNIWLDGM.

Positions 134 and 155 each coordinate S-adenosyl-L-methionine.

Belongs to the methyltransferase superfamily. TrmY family. Homodimer.

The protein localises to the cytoplasm. It catalyses the reaction pseudouridine(54) in tRNA + S-adenosyl-L-methionine = N(1)-methylpseudouridine(54) in tRNA + S-adenosyl-L-homocysteine + H(+). In terms of biological role, specifically catalyzes the N1-methylation of pseudouridine at position 54 (Psi54) in tRNAs. This chain is tRNA (pseudouridine(54)-N(1))-methyltransferase, found in Thermococcus kodakarensis (strain ATCC BAA-918 / JCM 12380 / KOD1) (Pyrococcus kodakaraensis (strain KOD1)).